A 490-amino-acid chain; its full sequence is Acetyl-coenzyme A carboxylase carboxyl transferase subunit beta, chloroplastic (490 aa).

The interval 184-203 (LNSSENEGSSRRTRTKGSDL) is disordered. The CoA carboxyltransferase N-terminal domain occupies 221-490 (LWVQCENCYG…PLNQKSSKIK (270 aa)). 4 residues coordinate Zn(2+): Cys225, Cys228, Cys244, and Cys247. The C4-type zinc-finger motif lies at 225–247 (CENCYGLNYKKFLKSKMNICEQC).

It belongs to the AccD/PCCB family. Acetyl-CoA carboxylase is a heterohexamer composed of biotin carboxyl carrier protein, biotin carboxylase and 2 subunits each of ACCase subunit alpha and ACCase plastid-coded subunit beta (accD). The cofactor is Zn(2+). RNA expressed in leaf, root, stem, and tuber; the least expression occurs in stems. RNA persists even in senescent leaves.

Its subcellular location is the plastid. It localises to the chloroplast stroma. The catalysed reaction is N(6)-carboxybiotinyl-L-lysyl-[protein] + acetyl-CoA = N(6)-biotinyl-L-lysyl-[protein] + malonyl-CoA. The protein operates within lipid metabolism; malonyl-CoA biosynthesis; malonyl-CoA from acetyl-CoA: step 1/1. Its function is as follows. Component of the acetyl coenzyme A carboxylase (ACC) complex. Biotin carboxylase (BC) catalyzes the carboxylation of biotin on its carrier protein (BCCP) and then the CO(2) group is transferred by the transcarboxylase to acetyl-CoA to form malonyl-CoA. The chain is Acetyl-coenzyme A carboxylase carboxyl transferase subunit beta, chloroplastic from Solanum tuberosum (Potato).